The following is a 459-amino-acid chain: Vanillin aminotransferase (459 aa).

Pyridoxal 5'-phosphate-binding positions include 115-116 (GS) and Asp-255. Lys-284 carries the post-translational modification N6-(pyridoxal phosphate)lysine. Pyridoxal 5'-phosphate is bound at residue 320–321 (FT). Residues 428–459 (LSLEELDELIRIYGKALKDTEKRVEELKSQKK) are a coiled coil.

Belongs to the class-III pyridoxal-phosphate-dependent aminotransferase family. Expressed in placental tissue of immature fruit.

It catalyses the reaction vanillin + L-alanine = vanillylamine + pyruvate. Involved in the biosynthesis of capsaicinoids natural products, pungent alkaloids synthesized from phenylpropanoid intermediates in the placental tissue of chili pepper fruit acting as repellant on herbivorous mammals and conferring spiciness to hot peppers. Can transfer an amine from alanine to vanillin, forming vanillylamine and pyruvate. The polypeptide is Vanillin aminotransferase (Capsicum frutescens (Cayenne pepper)).